A 465-amino-acid polypeptide reads, in one-letter code: Sensor histidine kinase ZraS (465 aa).

Residues 1-14 (MSFIRLHKDAAAMW) are Cytoplasmic-facing. A helical transmembrane segment spans residues 15–35 (LSRLLPAAIFILVGLFSIMVI). Over 36-203 (RDYGRESAAA…ATQAREWRNT (168 aa)) the chain is Periplasmic. The helical transmembrane segment at 204–224 (LIVLSALAAVLLATLLAFFWY) threads the bilayer. At 225 to 465 (QRYQRSHREL…WLPVIARQQD (241 aa)) the chain is on the cytoplasmic side. The Histidine kinase domain maps to 253 to 461 (GVAHEIRNPL…VFTIWLPVIA (209 aa)). Histidine 256 is subject to Phosphohistidine; by autocatalysis.

In terms of processing, autophosphorylated.

Its subcellular location is the cell inner membrane. The enzyme catalyses ATP + protein L-histidine = ADP + protein N-phospho-L-histidine.. Its activity is regulated as follows. Activity of the ZraS/ZraR two-component system is repressed by the zinc-bound form of ZraP, which probably interacts with the periplasmic region of ZraS. Functionally, part of the Zra signaling pathway, an envelope stress response (ESR) system composed of the periplasmic accessory protein ZraP, the histidine kinase ZraS and the transcriptional regulator ZraR. The ZraPSR system contributes to antibiotic resistance and is important for membrane integrity in the presence of membrane-targeting biocides. ZraS is a member of the two-component regulatory system ZraS/ZraR. Functions as a membrane-associated sensor kinase that phosphorylates ZraR in response to high concentrations of Zn(2+) or Pb(2+) in the medium. The sequence is that of Sensor histidine kinase ZraS (zraS) from Salmonella typhi.